Consider the following 260-residue polypeptide: tRNA (guanine-N(1)-)-methyltransferase (260 aa).

Residues Gly117 and 137-142 contribute to the S-adenosyl-L-methionine site; that span reads LGDFVL.

Belongs to the RNA methyltransferase TrmD family. Homodimer.

The protein resides in the cytoplasm. The enzyme catalyses guanosine(37) in tRNA + S-adenosyl-L-methionine = N(1)-methylguanosine(37) in tRNA + S-adenosyl-L-homocysteine + H(+). Specifically methylates guanosine-37 in various tRNAs. This Cupriavidus necator (strain ATCC 17699 / DSM 428 / KCTC 22496 / NCIMB 10442 / H16 / Stanier 337) (Ralstonia eutropha) protein is tRNA (guanine-N(1)-)-methyltransferase.